The primary structure comprises 256 residues: Peroxisomal membrane protein PMP30A (256 aa).

This sequence belongs to the peroxin-11 family.

The protein resides in the peroxisome membrane. Functionally, involved in peroxisomal proliferation. Could participate in peroxisomal elongation or fission. May be involved in parceling of peroxisomes into regular quanta. This chain is Peroxisomal membrane protein PMP30A (PEX11A), found in Candida boidinii (Yeast).